The sequence spans 247 residues: Submandibular gland secretory Glx-rich protein CB (247 aa).

An N-terminal signal peptide occupies residues 1–18 (MLVVLLTAALLALSSAQG). The segment at 14-219 (SSAQGTDEEV…PQHYRGRPPK (206 aa)) is disordered. 7 stretches are compositionally biased toward low complexity: residues 39–50 (PVDSGSDPPSAD), 58–71 (EGES…EPPA), 81–93 (QQEP…QEPP), 104–116 (QQEP…QEPP), 126–139 (QQQQ…QEPP), 150–159 (QQESTQAENQ), and 178–196 (VESP…QQTN). 5 consecutive repeat copies span residues 67–89 (EEPP…QAEN), 90–112 (QEPP…QAEN), 113–135 (QEPP…QAEN), 136–158 (QEPP…QAEN), and 159–181 (QEPS…VESP). The segment at 67–181 (EEPPATSGSE…QPEEGNVESP (115 aa)) is 5 X 23 AA tandem repeats. Positions 197 to 212 (PEEKPPAPKTQEEPQH) are enriched in basic and acidic residues.

Submandibular gland acinar cells.

The protein resides in the secreted. Functionally, GRP proteins have a marked affinity for hydroxyapatite. They may play a role in the formation of the protective acquired pellicle at the saliva-tooth interface. The polypeptide is Submandibular gland secretory Glx-rich protein CB (Grpcb) (Rattus norvegicus (Rat)).